A 410-amino-acid chain; its full sequence is D-amino acid dehydrogenase (410 aa).

Residue G9–G14 participates in FAD binding.

Belongs to the DadA oxidoreductase family. The cofactor is FAD.

It is found in the cell inner membrane. It catalyses the reaction a D-alpha-amino acid + a quinone + H2O = a 2-oxocarboxylate + a quinol + NH4(+). Functionally, catalyzes the oxidative deamination of D-amino acids. Has broad substrate specificity; is mostly active on D-proline, and to a lesser extent, on several other D-amino acids such as D-alanine, D-phenylalanine and D-serine. Mediates electron transport from D-proline to coenzyme Q1 in vitro, and is involved in the electron transport chain from D-proline to the c-type cytochrome in vivo. The sequence is that of D-amino acid dehydrogenase from Helicobacter pylori (strain ATCC 700392 / 26695) (Campylobacter pylori).